Consider the following 554-residue polypeptide: Afadin- and alpha-actinin-binding protein A (554 aa).

Coiled coils occupy residues 122-287 (LEYL…SQRK) and 359-449 (ENGL…AIRL). The interval 508 to 528 (LASSGDYSRRPSKALPITSSS) is disordered.

This sequence belongs to the ADIP family. As to quaternary structure, interacts with WRAP73.

It is found in the cell junction. The protein resides in the adherens junction. Its subcellular location is the cytoplasm. It localises to the cytoskeleton. The protein localises to the microtubule organizing center. It is found in the centrosome. The protein resides in the centriolar satellite. Belongs to an adhesion system, which plays a role in the organization of homotypic, interneuronal and heterotypic cell-cell adherens junctions (AJs). Involved in cell movement. Acts as a centrosome maturation factor, probably by maintaining the integrity of the pericentriolar material and proper microtubule nucleation at mitotic spindle poles. The function seems to implicate at least in part WRAP73; the SSX2IP:WRAP73 complex is proposed to act as regulator of spindle anchoring at the mitotic centrosome. This chain is Afadin- and alpha-actinin-binding protein A (ssx2ip-a), found in Xenopus laevis (African clawed frog).